We begin with the raw amino-acid sequence, 305 residues long: Delta-9 acyl-lipid desaturase 1 (305 aa).

The tract at residues 1 to 20 (MSLSASEKEENNKKMAADKA) is disordered. 2 helical membrane passes run 39–59 (IVKA…PFNF) and 60–80 (TWPA…GITV). Fe cation-binding residues include H83, H88, H120, H123, and H124. A Histidine box-1 motif is present at residues 83–88 (HRNLAH). The Histidine box-2 signature appears at 120–124 (HRYHH). Residues 180–200 (VLYHILTFGFLLYYFGGLSFL) traverse the membrane as a helical segment. H223, H252, H255, and H256 together coordinate Fe cation. The Histidine box-3 signature appears at 252-256 (HNNHH). A helical membrane pass occupies residues 268–288 (WWQIDISWYIVRFLEIIGLAT).

This sequence belongs to the fatty acid desaturase type 1 family. Fe cation is required as a cofactor. Strongly expressed in inflorescence meristems, leaves, and flowers, and weakly in roots and seedpods.

It localises to the endoplasmic reticulum membrane. The protein resides in the plastid. The protein localises to the chloroplast membrane. It participates in lipid metabolism; polyunsaturated fatty acid biosynthesis. Its function is as follows. Involved in delta-9 desaturation of fatty acids. Involved in the production of very-long-chain fatty acids (VLCFAs). May desaturate chloroplastic monogalactosyl diacylglycerol (MGDG) and alter chloroplast membrane fluidity, which is required to prime a cold acclimation response. This chain is Delta-9 acyl-lipid desaturase 1, found in Arabidopsis thaliana (Mouse-ear cress).